The following is a 610-amino-acid chain: UvrABC system protein C (610 aa).

Residues 13-91 form the GIY-YIG domain; that stretch reads HLPGVYRMYD…IKENQPKYNV (79 aa). Residues 201–236 form the UVR domain; the sequence is GQVIEHLVQKMENAAQELDFEAAARFRDQIQSVRAV.

Belongs to the UvrC family. In terms of assembly, interacts with UvrB in an incision complex.

It localises to the cytoplasm. Its function is as follows. The UvrABC repair system catalyzes the recognition and processing of DNA lesions. UvrC both incises the 5' and 3' sides of the lesion. The N-terminal half is responsible for the 3' incision and the C-terminal half is responsible for the 5' incision. In Actinobacillus pleuropneumoniae serotype 3 (strain JL03), this protein is UvrABC system protein C.